The sequence spans 211 residues: FMN-dependent NADH:quinone oxidoreductase (211 aa).

Residues 17-19 (SYS) and 102-105 (MWNF) contribute to the FMN site.

This sequence belongs to the azoreductase type 1 family. In terms of assembly, homodimer. FMN serves as cofactor.

It catalyses the reaction 2 a quinone + NADH + H(+) = 2 a 1,4-benzosemiquinone + NAD(+). It carries out the reaction N,N-dimethyl-1,4-phenylenediamine + anthranilate + 2 NAD(+) = 2-(4-dimethylaminophenyl)diazenylbenzoate + 2 NADH + 2 H(+). Functionally, quinone reductase that provides resistance to thiol-specific stress caused by electrophilic quinones. Also exhibits azoreductase activity. Catalyzes the reductive cleavage of the azo bond in aromatic azo compounds to the corresponding amines. The protein is FMN-dependent NADH:quinone oxidoreductase of Geobacillus kaustophilus (strain HTA426).